A 264-amino-acid chain; its full sequence is Hydroxyethylthiazole kinase (264 aa).

A substrate-binding site is contributed by methionine 43. Arginine 119 and threonine 165 together coordinate ATP. Glycine 192 is a binding site for substrate.

It belongs to the Thz kinase family. Mg(2+) is required as a cofactor.

The enzyme catalyses 5-(2-hydroxyethyl)-4-methylthiazole + ATP = 4-methyl-5-(2-phosphooxyethyl)-thiazole + ADP + H(+). It functions in the pathway cofactor biosynthesis; thiamine diphosphate biosynthesis; 4-methyl-5-(2-phosphoethyl)-thiazole from 5-(2-hydroxyethyl)-4-methylthiazole: step 1/1. In terms of biological role, catalyzes the phosphorylation of the hydroxyl group of 4-methyl-5-beta-hydroxyethylthiazole (THZ). This Anoxybacillus flavithermus (strain DSM 21510 / WK1) protein is Hydroxyethylthiazole kinase.